The following is a 297-amino-acid chain: Nucleotide-binding protein Bsph_0448 (297 aa).

ATP is bound at residue 19 to 26 (GMSGAGKT). Position 70-73 (70-73 (DMRG)) interacts with GTP.

The protein belongs to the RapZ-like family.

Its function is as follows. Displays ATPase and GTPase activities. The protein is Nucleotide-binding protein Bsph_0448 of Lysinibacillus sphaericus (strain C3-41).